The primary structure comprises 542 residues: Importin subunit alpha (542 aa).

An N-acetylmethionine modification is found at M1. A compositionally biased stretch (polar residues) spans 1–11 (MDNGTDSSTSK). Residues 1–65 (MDNGTDSSTS…RNFIPPTDGA (65 aa)) enclose the IBB domain. Residues 1 to 77 (MDNGTDSSTS…DEEDESSVSA (77 aa)) are disordered. The span at 27–53 (FSADELRRRRDTQQVELRKAKRDEALA) shows a compositional bias: basic and acidic residues. Residues 89 to 122 (LPQMTQQLNSDDMQEQLSATVKFRQILSREHRPP) form an ARM 1; truncated repeat. ARM repeat units follow at residues 123–162 (IDVVIQAGVVPRLVEFMRENQPEMLQLEAAWALTNIASGT), 163–204 (SAQT…AGDS), 205–251 (TDYR…PQPD), 252–288 (WSVVSQALPTLAKLIYSMDTETLVDACWAISYLSDGP), 289–330 (QEAI…VTGN), 331–372 (DLQT…TAGN), 373–417 (TEQI…GLQR), and 418–471 (PDII…LNIN). Residues 209–335 (DYVLQCNAME…IVTGNDLQTQ (127 aa)) form an NLS binding site 1 region. The segment at 419 to 505 (DIIRYLVSQG…KIYEKAYKII (87 aa)) is NLS binding site 2. The stretch at 472–508 (ENADFIEKAGGMEKIFNCQQNENDKIYEKAYKIIETY) is one ARM 10; atypical repeat.

This sequence belongs to the importin alpha family. In terms of assembly, forms a complex with an importin beta subunit. In the nucleus, interacts with NUP2 which accelerate release of NLSs, NUP2 is subsequently displaced by CSE1:RanGTP which mediates re-export and recycling. Interacts with HEH2, SHE2, and STS1.

Its subcellular location is the cytoplasm. The protein localises to the perinuclear region. Functionally, functions in nuclear protein import as an adapter protein for importin beta nuclear receptors. Binds specifically and directly to substrates containing either a simple or bipartite NLS motif. Promotes docking of import substrates to the nuclear envelope. Together with importin beta KAP95, mediates nuclear import of transcription factor GCN4. Together with tethering factor STS1, targets the proteasome to the nucleus. The sequence is that of Importin subunit alpha (SRP1) from Saccharomyces cerevisiae (strain ATCC 204508 / S288c) (Baker's yeast).